Consider the following 953-residue polypeptide: Coiled-coil domain-containing protein 14 (953 aa).

Residues 1 to 21 show a composition bias toward basic residues; sequence MKRGIRRDPFRKRKLGGRAKK. Disordered regions lie at residues 1-22 and 52-72; these read MKRG…AKKV and SGAR…AKLT. Position 124 is a phosphoserine (Ser124). Disordered stretches follow at residues 126-189 and 268-287; these read SETA…TSDL and PPCP…SQFA. Residues 145 to 154 show a composition bias toward basic residues; it reads YGSKKKRHEK. The segment covering 169–187 has biased composition (basic and acidic residues); the sequence is DNKKQIPNEASARSERDTS. Positions 277-287 are enriched in polar residues; the sequence is EVQTDGNSQFA. 2 coiled-coil regions span residues 383–413 and 483–618; these read LATN…RDTK and AMQP…AEKE. 3 positions are modified to phosphoserine: Ser670, Ser754, and Ser798.

In terms of assembly, interacts with CEP63.

The protein localises to the cytoplasm. It is found in the cytoskeleton. Its subcellular location is the microtubule organizing center. The protein resides in the centrosome. It localises to the centriolar satellite. Functionally, negatively regulates centriole duplication. Negatively regulates CEP63 and CDK2 centrosomal localization. In Homo sapiens (Human), this protein is Coiled-coil domain-containing protein 14 (CCDC14).